A 340-amino-acid polypeptide reads, in one-letter code: Histidinol-phosphate aminotransferase (340 aa).

Lys204 carries the N6-(pyridoxal phosphate)lysine modification.

It belongs to the class-II pyridoxal-phosphate-dependent aminotransferase family. Histidinol-phosphate aminotransferase subfamily. It depends on pyridoxal 5'-phosphate as a cofactor.

The catalysed reaction is L-histidinol phosphate + 2-oxoglutarate = 3-(imidazol-4-yl)-2-oxopropyl phosphate + L-glutamate. It functions in the pathway amino-acid biosynthesis; L-histidine biosynthesis; L-histidine from 5-phospho-alpha-D-ribose 1-diphosphate: step 7/9. The chain is Histidinol-phosphate aminotransferase from Thermococcus gammatolerans (strain DSM 15229 / JCM 11827 / EJ3).